The chain runs to 171 residues: S-ribosylhomocysteine lyase (171 aa).

Fe cation-binding residues include His54, His58, and Cys128.

The protein belongs to the LuxS family. In terms of assembly, homodimer. Fe cation serves as cofactor.

The catalysed reaction is S-(5-deoxy-D-ribos-5-yl)-L-homocysteine = (S)-4,5-dihydroxypentane-2,3-dione + L-homocysteine. Its function is as follows. Involved in the synthesis of autoinducer 2 (AI-2) which is secreted by bacteria and is used to communicate both the cell density and the metabolic potential of the environment. The regulation of gene expression in response to changes in cell density is called quorum sensing. Catalyzes the transformation of S-ribosylhomocysteine (RHC) to homocysteine (HC) and 4,5-dihydroxy-2,3-pentadione (DPD). The polypeptide is S-ribosylhomocysteine lyase (Pectobacterium atrosepticum (strain SCRI 1043 / ATCC BAA-672) (Erwinia carotovora subsp. atroseptica)).